The sequence spans 274 residues: Deoxyribonuclease TATDN3 (274 aa).

Zn(2+) contacts are provided by histidine 12, histidine 14, glutamate 107, histidine 147, histidine 170, and aspartate 218.

The protein belongs to the metallo-dependent hydrolases superfamily. TatD-type hydrolase family. It depends on Mn(2+) as a cofactor. Ca(2+) serves as cofactor. Requires Mg(2+) as cofactor. The cofactor is Zn(2+).

Its subcellular location is the nucleus. The 3'-exonuclease activity is sensitive to the metal ion present in the active site, whereas the AP endodeoxyribonuclease activity is observed in a variety of divalent metal cofactors. 3'-exoxonuclease activity is suppressed in the presence of Ca(2+), Zn(2+) and Ni(2+). Exhibits 3'-exonuclease activities and apurinic/apyrimidinic (AP) endonuclease (in vitro). Show preferential AP endonuclease activity on double-stranded DNA substrates and 3'- exonuclease activity on single-stranded DNA. The sequence is that of Deoxyribonuclease TATDN3 (TATDN3) from Homo sapiens (Human).